A 245-amino-acid polypeptide reads, in one-letter code: MIIVSRAIVLHNTAYNDSYSIAHLFSRESGRVSYLIPRSSKRGKSGGSLRLLISPLNELEITAEHKQHRDLHFIKEAKLCSLHGRIQSDPVRNSIALFLAEFLYLILRLPEADTNLYDFVAFSIDKLEEMDGPMANFHLAFLFRLLVPLGLIPDLQFGGSVIPRWFDPADGRFVPNAPAHGRGIPPHQSTYLQLFSRITFDNMKAFRLSRAERRQVLDYLVDYYRFHLPPFPLLKTPDILSTLFD.

The protein belongs to the RecO family.

In terms of biological role, involved in DNA repair and RecF pathway recombination. The chain is DNA repair protein RecO from Porphyromonas gingivalis (strain ATCC BAA-308 / W83).